Here is a 384-residue protein sequence, read N- to C-terminus: GDP-mannose transporter (384 aa).

The Cytoplasmic portion of the chain corresponds to 1–40 (MVEDKKTDDYTIEMDKMDQGSKNFEAAAPPPQPRTPPAGS). The helical transmembrane segment at 41 to 61 (ISNNPILPVLAYCGSSILMTV) threads the bilayer. The Lumenal portion of the chain corresponds to 62–69 (MNKYVLSG). A helical membrane pass occupies residues 70-90 (LDFNLNFFLLCVQSIVCIVAI). Topologically, residues 91–110 (QTCKSCGLITYRDFSADEAR) are cytoplasmic. A helical transmembrane segment spans residues 111–127 (KWFPITLLLIGMIYTGS). At 128 to 134 (KALQFLS) the chain is on the lumenal side. The chain crosses the membrane as a helical span at residues 135–151 (IPVYTIFKNLTIILIAY). The Cytoplasmic segment spans residues 152–160 (GEVLWFGGS). Residues 161–182 (VTGLTLFSFGLMVLSSIIAAWA) form a helical membrane-spanning segment. The Lumenal portion of the chain corresponds to 183-200 (DIKHAVESTGDATAKVST). Residues 201 to 221 (LNAGYIWMLVNCLCTSSYVLG) form a helical membrane-spanning segment. At 222-236 (MRKRIKLTNFKDFDT) the chain is on the cytoplasmic side. The helical transmembrane segment at 237–257 (LAMFYNNLLSIPVLIVLTGLM) threads the bilayer. Residues 258-276 (EDWSSANITRNFPPADRNN) lie on the Lumenal side of the membrane. A glycan (N-linked (GlcNAc...) asparagine) is linked at Asn-264. The chain crosses the membrane as a helical span at residues 277–297 (IIFAMILSGLSSVFISYTSAW). At 298–305 (CVRVTSST) the chain is on the cytoplasmic side. Residues 306–326 (TYSMVGALNKLPIALSGLIFF) traverse the membrane as a helical segment. The Lumenal portion of the chain corresponds to 327–329 (DAP). The helical transmembrane segment at 330–350 (VTFPSVSAIVVGFVSGIVYAV) threads the bilayer. Residues 351–384 (AKIKQNAKPKTGVLPMSNPPVSASSQSMRDSLRS) are Cytoplasmic-facing. The disordered stretch occupies residues 364-384 (LPMSNPPVSASSQSMRDSLRS). The segment covering 369–384 (PPVSASSQSMRDSLRS) has biased composition (polar residues).

Belongs to the TPT transporter family. SLC35D subfamily. As to quaternary structure, homooligomer.

Its subcellular location is the golgi apparatus membrane. It localises to the cytoplasmic vesicle membrane. The protein resides in the endoplasmic reticulum membrane. In terms of biological role, involved in the import of GDP-mannose from the cytoplasm into the Golgi lumen. In Aspergillus terreus (strain NIH 2624 / FGSC A1156), this protein is GDP-mannose transporter (gmt1).